The primary structure comprises 704 residues: Glycine--tRNA ligase beta subunit (704 aa).

The protein belongs to the class-II aminoacyl-tRNA synthetase family. In terms of assembly, tetramer of two alpha and two beta subunits.

The protein localises to the cytoplasm. It catalyses the reaction tRNA(Gly) + glycine + ATP = glycyl-tRNA(Gly) + AMP + diphosphate. This Rhizobium etli (strain ATCC 51251 / DSM 11541 / JCM 21823 / NBRC 15573 / CFN 42) protein is Glycine--tRNA ligase beta subunit.